We begin with the raw amino-acid sequence, 209 residues long: Uracil phosphoribosyltransferase (209 aa).

Residues R77, R102, and 129–137 (DPMLATGVS) contribute to the 5-phospho-alpha-D-ribose 1-diphosphate site. Residues I192 and 197–199 (GDA) each bind uracil. D198 is a 5-phospho-alpha-D-ribose 1-diphosphate binding site.

The protein belongs to the UPRTase family. Mg(2+) is required as a cofactor.

The enzyme catalyses UMP + diphosphate = 5-phospho-alpha-D-ribose 1-diphosphate + uracil. Its pathway is pyrimidine metabolism; UMP biosynthesis via salvage pathway; UMP from uracil: step 1/1. With respect to regulation, allosterically activated by GTP. In terms of biological role, catalyzes the conversion of uracil and 5-phospho-alpha-D-ribose 1-diphosphate (PRPP) to UMP and diphosphate. The sequence is that of Uracil phosphoribosyltransferase from Metamycoplasma arthritidis (strain 158L3-1) (Mycoplasma arthritidis).